Here is a 433-residue protein sequence, read N- to C-terminus: Trigger factor (433 aa).

Residues 163-248 (GDTVNIDFSG…VNEIKFKEVP (86 aa)) form the PPIase FKBP-type domain.

Belongs to the FKBP-type PPIase family. Tig subfamily.

It is found in the cytoplasm. It carries out the reaction [protein]-peptidylproline (omega=180) = [protein]-peptidylproline (omega=0). In terms of biological role, involved in protein export. Acts as a chaperone by maintaining the newly synthesized protein in an open conformation. Functions as a peptidyl-prolyl cis-trans isomerase. The chain is Trigger factor from Staphylococcus aureus (strain bovine RF122 / ET3-1).